The primary structure comprises 99 residues: UPF0213 protein RBAM_000440 (99 aa).

The 76-residue stretch at 4 to 79 (NSHFFYVLLC…KQLTRKKKEQ (76 aa)) folds into the GIY-YIG domain.

It belongs to the UPF0213 family.

This is UPF0213 protein RBAM_000440 from Bacillus velezensis (strain DSM 23117 / BGSC 10A6 / LMG 26770 / FZB42) (Bacillus amyloliquefaciens subsp. plantarum).